A 1104-amino-acid polypeptide reads, in one-letter code: Carbamoyl phosphate synthase large chain (1104 aa).

Residues 1–403 (MPRRQDIQKI…SFQKALRSLE (403 aa)) are carboxyphosphate synthetic domain. Residues Arg129, Arg170, Gly176, Gly177, Gln209, Leu211, Glu216, Gly242, Ile243, His244, Gln286, and Glu300 each coordinate ATP. Positions 133-329 (NEAMDKIGVK…IAKMAAKLAV (197 aa)) constitute an ATP-grasp 1 domain. 3 residues coordinate Mg(2+): Gln286, Glu300, and Asn302. Mn(2+) contacts are provided by Gln286, Glu300, and Asn302. Positions 404–552 (TGRAGWGCDK…YSTYEEETEV (149 aa)) are oligomerization domain. The tract at residues 553 to 966 (IPASKPKVMI…AFAKAELGAG (414 aa)) is carbamoyl phosphate synthetic domain. The region spanning 703 to 900 (EKILQKLNIS…LAKLASLIMS (198 aa)) is the ATP-grasp 2 domain. Positions 739, 778, 780, 785, 811, 812, 813, 814, 854, and 871 each coordinate ATP. The Mg(2+) site is built by Gln854, Glu871, and Asn873. Mn(2+) contacts are provided by Gln854, Glu871, and Asn873. Residues 967 to 1104 (ERLPLTGTVF…KTIQEYCPNF (138 aa)) enclose the MGS-like domain. The interval 967 to 1104 (ERLPLTGTVF…KTIQEYCPNF (138 aa)) is allosteric domain.

Belongs to the CarB family. Composed of two chains; the small (or glutamine) chain promotes the hydrolysis of glutamine to ammonia, which is used by the large (or ammonia) chain to synthesize carbamoyl phosphate. Tetramer of heterodimers (alpha,beta)4. Mg(2+) serves as cofactor. It depends on Mn(2+) as a cofactor.

It carries out the reaction hydrogencarbonate + L-glutamine + 2 ATP + H2O = carbamoyl phosphate + L-glutamate + 2 ADP + phosphate + 2 H(+). The enzyme catalyses hydrogencarbonate + NH4(+) + 2 ATP = carbamoyl phosphate + 2 ADP + phosphate + 2 H(+). Its pathway is amino-acid biosynthesis; L-arginine biosynthesis; carbamoyl phosphate from bicarbonate: step 1/1. It participates in pyrimidine metabolism; UMP biosynthesis via de novo pathway; (S)-dihydroorotate from bicarbonate: step 1/3. Large subunit of the glutamine-dependent carbamoyl phosphate synthetase (CPSase). CPSase catalyzes the formation of carbamoyl phosphate from the ammonia moiety of glutamine, carbonate, and phosphate donated by ATP, constituting the first step of 2 biosynthetic pathways, one leading to arginine and/or urea and the other to pyrimidine nucleotides. The large subunit (synthetase) binds the substrates ammonia (free or transferred from glutamine from the small subunit), hydrogencarbonate and ATP and carries out an ATP-coupled ligase reaction, activating hydrogencarbonate by forming carboxy phosphate which reacts with ammonia to form carbamoyl phosphate. The chain is Carbamoyl phosphate synthase large chain from Nostoc sp. (strain PCC 7120 / SAG 25.82 / UTEX 2576).